Reading from the N-terminus, the 325-residue chain is Cell wall mannoprotein PIR3 (325 aa).

The signal sequence occupies residues 1–18 (MQYKKPLVVSALAATSLA). A propeptide spanning residues 19–67 (AYAPKDPWSTLTPSATYKGGITDYSSSFGIAIEAVATSASSVASSKAKR) is cleaved from the precursor. PIR1/2/3 repeat units follow at residues 68–91 (AASQ…KKST), 92–109 (AAAV…AKST), 110–127 (AAAV…AKST), 128–145 (AAAV…AKST), 146–163 (AAAV…AKST), 164–181 (AAAA…TTST), 182–199 (KAAA…SKTT), and 200–217 (SGAS…AEVK).

The protein belongs to the PIR protein family. In terms of processing, covalently linked to beta-1,3-glucan of the inner cell wall layer via an alkali-sensitive ester linkage between the gamma-carboxyl group of glutamic acids, arising from specific glutamines within the PIR1/2/3 repeats, and hydroxyl groups of glucoses of beta-1,3-glucan chains. Post-translationally, O-glycosylated. Extensively O-mannosylated.

The protein resides in the secreted. The protein localises to the cell wall. Component of the outer cell wall layer. Required for stability of the cell wall and for optimal growth. Required for resistance against several antifungal and cell wall-perturbing agents. The chain is Cell wall mannoprotein PIR3 (PIR3) from Saccharomyces cerevisiae (strain ATCC 204508 / S288c) (Baker's yeast).